The following is a 38-amino-acid chain: Photosystem II reaction center protein L (38 aa).

A helical transmembrane segment spans residues 17–37 (SLFWGLLLIFILAVLFSSYFF).

The protein belongs to the PsbL family. In terms of assembly, PSII is composed of 1 copy each of membrane proteins PsbA, PsbB, PsbC, PsbD, PsbE, PsbF, PsbH, PsbI, PsbJ, PsbK, PsbL, PsbM, PsbT, PsbX, PsbY, PsbZ, Psb30/Ycf12, at least 3 peripheral proteins of the oxygen-evolving complex and a large number of cofactors. It forms dimeric complexes.

Its subcellular location is the plastid. The protein localises to the chloroplast thylakoid membrane. Its function is as follows. One of the components of the core complex of photosystem II (PSII). PSII is a light-driven water:plastoquinone oxidoreductase that uses light energy to abstract electrons from H(2)O, generating O(2) and a proton gradient subsequently used for ATP formation. It consists of a core antenna complex that captures photons, and an electron transfer chain that converts photonic excitation into a charge separation. This subunit is found at the monomer-monomer interface and is required for correct PSII assembly and/or dimerization. The polypeptide is Photosystem II reaction center protein L (Guillardia theta (Cryptophyte)).